The following is a 341-amino-acid chain: Tetraacyldisaccharide 4'-kinase (341 aa).

Residue 64–71 (AVGGSGKT) participates in ATP binding.

This sequence belongs to the LpxK family.

It carries out the reaction a lipid A disaccharide + ATP = a lipid IVA + ADP + H(+). Its pathway is glycolipid biosynthesis; lipid IV(A) biosynthesis; lipid IV(A) from (3R)-3-hydroxytetradecanoyl-[acyl-carrier-protein] and UDP-N-acetyl-alpha-D-glucosamine: step 6/6. Transfers the gamma-phosphate of ATP to the 4'-position of a tetraacyldisaccharide 1-phosphate intermediate (termed DS-1-P) to form tetraacyldisaccharide 1,4'-bis-phosphate (lipid IVA). In Azoarcus sp. (strain BH72), this protein is Tetraacyldisaccharide 4'-kinase.